Reading from the N-terminus, the 76-residue chain is Candidate secreted effector protein MPL124497 (76 aa).

The first 21 residues, 1-21, serve as a signal peptide directing secretion; that stretch reads MKLIIFAAISVAFMSFDQVLG.

Belongs to the CPGH1 family.

The protein localises to the secreted. The protein resides in the host cell. Its subcellular location is the host cytoplasm. It localises to the host nucleus. Functionally, rust effector delivered into infected tissues to modulate host functions and contribute to pathogen virulence. Enhances leaf colonization by the bacteria Pseudomonas syringae and the oomycete Hyaloperonospora arabidopsidis pathogens in an Arabidopsis thaliana infection model. This is Candidate secreted effector protein MPL124497 from Melampsora larici-populina (strain 98AG31 / pathotype 3-4-7) (Poplar leaf rust fungus).